We begin with the raw amino-acid sequence, 311 residues long: Bifunctional protein FolD (311 aa).

174–176 (GKG) provides a ligand contact to NADP(+).

This sequence belongs to the tetrahydrofolate dehydrogenase/cyclohydrolase family. Homodimer.

The enzyme catalyses (6R)-5,10-methylene-5,6,7,8-tetrahydrofolate + NADP(+) = (6R)-5,10-methenyltetrahydrofolate + NADPH. It carries out the reaction (6R)-5,10-methenyltetrahydrofolate + H2O = (6R)-10-formyltetrahydrofolate + H(+). The protein operates within one-carbon metabolism; tetrahydrofolate interconversion. Its function is as follows. Catalyzes the oxidation of 5,10-methylenetetrahydrofolate to 5,10-methenyltetrahydrofolate and then the hydrolysis of 5,10-methenyltetrahydrofolate to 10-formyltetrahydrofolate. The protein is Bifunctional protein FolD of Pyrobaculum islandicum (strain DSM 4184 / JCM 9189 / GEO3).